We begin with the raw amino-acid sequence, 508 residues long: Anthranilate synthase component 1 (508 aa).

Residues S49 and 282–284 contribute to the L-tryptophan site; that span reads PYM. A chorismate-binding site is contributed by 317 to 318; sequence GT. E344 lines the Mg(2+) pocket. Chorismate is bound by residues Y432, R452, 466–468, and G468; that span reads GAG. Mg(2+) is bound at residue E481.

This sequence belongs to the anthranilate synthase component I family. As to quaternary structure, heterotetramer consisting of two non-identical subunits: a beta subunit (TrpG) and a large alpha subunit (TrpE). Requires Mg(2+) as cofactor.

The enzyme catalyses chorismate + L-glutamine = anthranilate + pyruvate + L-glutamate + H(+). The protein operates within amino-acid biosynthesis; L-tryptophan biosynthesis; L-tryptophan from chorismate: step 1/5. With respect to regulation, feedback inhibited by tryptophan. Part of a heterotetrameric complex that catalyzes the two-step biosynthesis of anthranilate, an intermediate in the biosynthesis of L-tryptophan. In the first step, the glutamine-binding beta subunit (TrpG) of anthranilate synthase (AS) provides the glutamine amidotransferase activity which generates ammonia as a substrate that, along with chorismate, is used in the second step, catalyzed by the large alpha subunit of AS (TrpE) to produce anthranilate. In the absence of TrpG, TrpE can synthesize anthranilate directly from chorismate and high concentrations of ammonia. In Bacillus caldotenax, this protein is Anthranilate synthase component 1 (trpE).